Consider the following 354-residue polypeptide: MGIEPNILENKKRHIDICLNKNDVKSGCNFLRFVKLKHNALSDFNFSEIDIKEEIFGYNISMPVFISSMTGGGKEGNDFNKSLVKIANYLKIPIGLGSFKLLFKYPEYIRDFALKRYAHSIPLFANIGAVQIVEFGISRIVEMIKRLEVDAIIVHLNAGQELMNVNGDRNFKGIKESIAKLSNFISVPLIVKETGFGISPSDVKKLFQLGVSYIDLAGSGGTNWVLVEGMKGNNLNIASCFSDWGIPSIFTLLSINDSLKANIFASGGYETGMDIAKGIALGAKLIGVAAVVLRAFYDSGEDAVFSLFSDYEHVLKMSMFLSGSKSLSDFRNNKYFLSSYLLAEFGVFKQFYGT.

Substrate is bound at residue K11–K12. FMN-binding positions include S67, S68–T70, S98, and N126. S98–K100 contacts substrate. A substrate-binding site is contributed by Q160. E161 provides a ligand contact to Mg(2+). Residues K192, T222, and A289–A290 contribute to the FMN site.

It belongs to the IPP isomerase type 2 family. Homooctamer. Dimer of tetramers. FMN serves as cofactor. Requires NADPH as cofactor. It depends on Mg(2+) as a cofactor.

The protein resides in the cytoplasm. It carries out the reaction isopentenyl diphosphate = dimethylallyl diphosphate. Involved in the biosynthesis of isoprenoids. Catalyzes the 1,3-allylic rearrangement of the homoallylic substrate isopentenyl (IPP) to its allylic isomer, dimethylallyl diphosphate (DMAPP). The chain is Isopentenyl-diphosphate delta-isomerase from Borreliella afzelii (strain PKo) (Borrelia afzelii).